A 178-amino-acid chain; its full sequence is Nicotinamide-nucleotide adenylyltransferase (178 aa).

The protein belongs to the archaeal NMN adenylyltransferase family.

The protein localises to the cytoplasm. The enzyme catalyses beta-nicotinamide D-ribonucleotide + ATP + H(+) = diphosphate + NAD(+). It participates in cofactor biosynthesis; NAD(+) biosynthesis; NAD(+) from nicotinamide D-ribonucleotide: step 1/1. This chain is Nicotinamide-nucleotide adenylyltransferase, found in Thermoplasma volcanium (strain ATCC 51530 / DSM 4299 / JCM 9571 / NBRC 15438 / GSS1).